The sequence spans 286 residues: Neuferricin homolog (286 aa).

The first 23 residues, 1-23, serve as a signal peptide directing secretion; it reads MFGFVKYLFKLQFLFILAAVLAG. Residues 61–145 form the Cytochrome b5 heme-binding domain; sequence ATVLTSAELS…KPNDLLGLAN (85 aa). A coiled-coil region spans residues 176-200; sequence HKYLALLEQAQIAKAEVDELRSKYP.

The protein belongs to the cytochrome b5 family. MAPR subfamily.

It localises to the secreted. Its function is as follows. Heme-binding protein. The protein is Neuferricin homolog of Drosophila pseudoobscura pseudoobscura (Fruit fly).